Consider the following 506-residue polypeptide: Cobyric acid synthase (506 aa).

A GATase cobBQ-type domain is found at 254–453 (DLDIAVIRLP…IHGIFESDSF (200 aa)). Catalysis depends on cysteine 334, which acts as the Nucleophile. The active site involves histidine 445.

The protein belongs to the CobB/CobQ family. CobQ subfamily.

Its pathway is cofactor biosynthesis; adenosylcobalamin biosynthesis. Catalyzes amidations at positions B, D, E, and G on adenosylcobyrinic A,C-diamide. NH(2) groups are provided by glutamine, and one molecule of ATP is hydrogenolyzed for each amidation. This is Cobyric acid synthase from Dehalococcoides mccartyi (strain ATCC BAA-2266 / KCTC 15142 / 195) (Dehalococcoides ethenogenes (strain 195)).